Consider the following 1578-residue polypeptide: FERM and PDZ domain-containing protein 1 (1578 aa).

Residues 57–135 (TVKIDKDTLL…SLSITVVRCT (79 aa)) enclose the PDZ domain. In terms of domain architecture, FERM spans 181–496 (NVLKLYLENG…GYYRLLVDPV (316 aa)). Disordered regions lie at residues 555–616 (KEEQ…EEDD), 720–743 (SDSS…QGWT), and 759–831 (PLAF…VKKY). Over residues 720-729 (SDSSESTASR) the composition is skewed to polar residues. A compositionally biased stretch (low complexity) spans 730-742 (QGGAPPAWGQQGW). Residues 793–811 (AEPSATSLQNKASTSSPEN) show a composition bias toward polar residues. Over residues 822 to 831 (PSRRGGVKKY) the composition is skewed to basic residues. The segment at 924-931 (EPETMETK) is important for interaction with GPSM2. Disordered stretches follow at residues 950-1030 (PNNK…LASN), 1070-1194 (KYTE…QGCQ), and 1347-1374 (PQPE…SAGS). A compositionally biased stretch (polar residues) spans 968–986 (TPHCSNPGSSGPDTAQARP). Residues 1100–1117 (TKEEPQGQLSLERDREVT) are compositionally biased toward basic and acidic residues. Over residues 1139–1150 (DVSNNVSQTLDI) the composition is skewed to polar residues.

As to quaternary structure, interacts with GPSM1. Interacts with GPSM2 (via TPR repeat region).

Its subcellular location is the cytoplasm. It is found in the cytosol. The protein localises to the cell membrane. Stabilizes membrane-bound GPSM1, and thereby promotes its interaction with GNAI1. This is FERM and PDZ domain-containing protein 1 (FRMPD1) from Homo sapiens (Human).